Here is a 331-residue protein sequence, read N- to C-terminus: MSRQLSRARPATVLGAMEMGRRMDAPTSAAVTRAFLERGHTEIDTAFVYSEGQSETILGGLGLRLGGSDCRVKIDTKAIPLFGNSLKPDSLRFQLETSLKRLQCPRVDLFYLHMPDHSTPVEETLRACHQLHQEGKFVELGLSNYAAWEVAEICTLCKSNGWILPTVYQGMYNAITRQVETELFPCLRHFGLRFYAFNPLAGGLLTGKYKYEDKNGKQPVGRFFGNTWAEMYRNRYWKEHHFEGIALVEKALQAAYGASAPSMTSATLRWMYHHSQLQGAHGDAVILGMSSLEQLEQNLAAAEEGPLEPAVVDAFNQAWHLVTHECPNYFR.

Ser-6 bears the Phosphoserine mark. NADPH contacts are provided by Met-17, Asp-44, and Tyr-49. The Proton donor role is filled by Tyr-49. Ser-85 carries the post-translational modification Phosphoserine. Residues His-113, Ser-143, Asn-144, Asn-198, Leu-200, Gly-202, Lys-208, Tyr-209, and Arg-222 each coordinate NADPH. Thr-227 is subject to Phosphothreonine. The NADPH site is built by Ser-290, Gln-294, and Asn-298.

This sequence belongs to the aldo/keto reductase family. Aldo/keto reductase 2 subfamily. In terms of assembly, homodimer. As to expression, expressed in colon, kidney, liver, pancreas, adenocarcinoma and endometrium.

Its subcellular location is the cytoplasm. The enzyme catalyses a primary alcohol + NADP(+) = an aldehyde + NADPH + H(+). It catalyses the reaction aflatoxin B1 dialdehyde + NADPH + H(+) = aflatoxin B1 C(6a)-monoaldehyde + NADP(+). It carries out the reaction aflatoxin B1 dialdehyde + NADPH + H(+) = aflatoxin B1 C(8)-monoaldehyde + NADP(+). The catalysed reaction is aflatoxin B1 C(6a)-monoaldehyde + NADPH + 2 H(+) = aflatoxin B1 triol + NADP(+). With respect to regulation, inhibited by citrate. In terms of biological role, catalyzes the NADPH-dependent reduction of various carbonyl-containing compounds, including aldehydes, ketones, and toxic products from cellular metabolism or environmental exposure. Can reduce the dialdehyde form of aflatoxin B1 (AFB1) into alcohol derivatives, via monoaldehydes intermediates. Can reduce the dialdehyde form of aflatoxin B1 (AFB1) into alcohol derivatives, via monoaldehydes intermediates, thus preventing the formation of protein adducts that contribute to AFB1-induced toxicity. This chain is Aldo-keto reductase family 7 member A3, found in Homo sapiens (Human).